A 154-amino-acid polypeptide reads, in one-letter code: MAARLCCQLDPARDVLCLRPVGAESRGRPVSGPFGPLPSPSSSAVPADHGAHLSLRGLPVCAFSSAGPCALRFTSARSMETTVNAHQVLPKVLHKRTLGLSAMSTTDLEAYFKDCLFKDWEELGEEIRLKVFVLGGCRHKLVCSPAPCNFFPSA.

Residues 68–117 form a mitochondrial targeting sequence region; the sequence is PCALRFTSARSMETTVNAHQVLPKVLHKRTLGLSAMSTTDLEAYFKDCLF.

It belongs to the orthohepadnavirus protein X family. As to quaternary structure, may form homodimer. May interact with host CEBPA, CFLAR, CREB1, DDB1, E4F1, HBXIP, HSPD1/HSP60, NFKBIA, POLR2E and SMAD4. Interacts with host SMC5-SMC6 complex and induces its degradation. Interacts with host TRPC4AP; leading to prevent ubiquitination of TRPC4AP. Interacts with host PLSCR1; this interaction promotes ubiquitination and degradation of HBx and impairs HBx-mediated cell proliferation. Post-translationally, a fraction may be phosphorylated in insect cells and HepG2 cells, a human hepatoblastoma cell line. Phosphorylated in vitro by host protein kinase C or mitogen-activated protein kinase. N-acetylated in insect cells.

The protein localises to the host cytoplasm. Its subcellular location is the host nucleus. It is found in the host mitochondrion. In terms of biological role, multifunctional protein that plays a role in silencing host antiviral defenses and promoting viral transcription. Does not seem to be essential for HBV infection. May be directly involved in development of cirrhosis and liver cancer (hepatocellular carcinoma). Most of cytosolic activities involve modulation of cytosolic calcium. The effect on apoptosis is controversial depending on the cell types in which the studies have been conducted. May induce apoptosis by localizing in mitochondria and causing loss of mitochondrial membrane potential. May also modulate apoptosis by binding host CFLAR, a key regulator of the death-inducing signaling complex (DISC). Promotes viral transcription by using the host E3 ubiquitin ligase DDB1 to target the SMC5-SMC6 complex to proteasomal degradation. This host complex would otherwise bind to viral episomal DNA, and prevents its transcription. Moderately stimulates transcription of many different viral and cellular transcription elements. Promoters and enhancers stimulated by HBx contain DNA binding sites for NF-kappa-B, AP-1, AP-2, c-EBP, ATF/CREB, or the calcium-activated factor NF-AT. This chain is Protein X, found in Homo sapiens (Human).